The chain runs to 492 residues: 6-phosphogluconate dehydrogenase, decarboxylating (492 aa).

Residues 13–18, 36–38, 78–80, and Asn-106 contribute to the NADP(+) site; these read GLAVMG, NRT, and VKA. Residue Asn-106 coordinates substrate. At Ser-107 the chain carries Phosphoserine. 132 to 134 contributes to the substrate binding site; it reads SGG. The active-site Proton acceptor is Lys-187. Substrate is bound at residue 190 to 191; it reads HN. The active-site Proton donor is Glu-194. Tyr-195 lines the substrate pocket. Ser-215 carries the phosphoserine modification. Residues Lys-264, Arg-291, Arg-449, and His-455 each contribute to the substrate site.

Belongs to the 6-phosphogluconate dehydrogenase family. As to quaternary structure, homodimer.

It catalyses the reaction 6-phospho-D-gluconate + NADP(+) = D-ribulose 5-phosphate + CO2 + NADPH. It functions in the pathway carbohydrate degradation; pentose phosphate pathway; D-ribulose 5-phosphate from D-glucose 6-phosphate (oxidative stage): step 3/3. Functionally, catalyzes the oxidative decarboxylation of 6-phosphogluconate to ribulose 5-phosphate and CO(2), with concomitant reduction of NADP to NADPH. In Schizosaccharomyces pombe (strain 972 / ATCC 24843) (Fission yeast), this protein is 6-phosphogluconate dehydrogenase, decarboxylating.